Reading from the N-terminus, the 613-residue chain is Metacaspase-1 (613 aa).

Residues His-404 and Cys-460 contribute to the active site.

It belongs to the peptidase C14B family. Monomer.

Its activity is regulated as follows. Activated by Ca(2+). Cysteine protease that cleaves specifically after arginine or lysine residues. May play a role in apoptosis. The polypeptide is Metacaspase-1 (Plasmodium falciparum (isolate 3D7)).